The chain runs to 511 residues: Histidine ammonia-lyase (511 aa).

Residues 143-145 (ASG) constitute a cross-link (5-imidazolinone (Ala-Gly)). Ser144 carries the post-translational modification 2,3-didehydroalanine (Ser).

Belongs to the PAL/histidase family. In terms of processing, contains an active site 4-methylidene-imidazol-5-one (MIO), which is formed autocatalytically by cyclization and dehydration of residues Ala-Ser-Gly.

It is found in the cytoplasm. It catalyses the reaction L-histidine = trans-urocanate + NH4(+). It functions in the pathway amino-acid degradation; L-histidine degradation into L-glutamate; N-formimidoyl-L-glutamate from L-histidine: step 1/3. The protein is Histidine ammonia-lyase of Vibrio cholerae serotype O1 (strain ATCC 39315 / El Tor Inaba N16961).